A 177-amino-acid polypeptide reads, in one-letter code: N-acetylmuramoyl-L-alanine amidase A (177 aa).

Positions 23–158 constitute an N-acetylmuramoyl-L-alanine amidase domain; the sequence is QTSAVIMHTM…SGNENRYDPG (136 aa). Cysteine 114 and cysteine 121 are joined by a disulfide.

The protein resides in the secreted. The enzyme catalyses Hydrolyzes the link between N-acetylmuramoyl residues and L-amino acid residues in certain cell-wall glycopeptides.. Its function is as follows. Antibacterial activity against Gram-positive bacteria M.luteus, S.aureus, E.faecalis and P.acidilactici and Gram-negative bacterium E.coli. This chain is N-acetylmuramoyl-L-alanine amidase A (cwhA), found in Achromobacter lyticus.